The chain runs to 228 residues: L-ribulose-5-phosphate 4-epimerase UlaF (228 aa).

Substrate-binding positions include 26–27, 43–44, and 72–73; these read GN, SG, and SS. Zn(2+) contacts are provided by Asp-74, His-93, and His-95. Asp-118 (proton donor/acceptor) is an active-site residue. Residue His-167 participates in Zn(2+) binding. Residue Tyr-225 is the Proton donor/acceptor of the active site.

It belongs to the aldolase class II family. AraD/FucA subfamily. Requires Zn(2+) as cofactor.

The enzyme catalyses L-ribulose 5-phosphate = D-xylulose 5-phosphate. It participates in cofactor degradation; L-ascorbate degradation; D-xylulose 5-phosphate from L-ascorbate: step 4/4. Its function is as follows. Catalyzes the isomerization of L-ribulose 5-phosphate to D-xylulose 5-phosphate. Is involved in the anaerobic L-ascorbate utilization. This is L-ribulose-5-phosphate 4-epimerase UlaF from Escherichia coli (strain SMS-3-5 / SECEC).